We begin with the raw amino-acid sequence, 369 residues long: Chanoclavine-I aldehyde reductase fgaOx3 (369 aa).

FMN is bound by residues 23–25 (PMT), alanine 58, glutamine 100, and histidine 169. Substrate is bound by residues histidine 169 and asparagine 172. Tyrosine 174 serves as the catalytic Proton donor. Residues glycine 292, 316-317 (GR), and arginine 317 contribute to the FMN site. Tyrosine 344 serves as a coordination point for substrate.

Belongs to the NADH:flavin oxidoreductase/NADH oxidase family. As to quaternary structure, monomer. FMN is required as a cofactor.

The catalysed reaction is dihydrochanoclavine-I aldehyde + NADP(+) = chanoclavine-I aldehyde + NADPH + H(+). It functions in the pathway alkaloid biosynthesis; ergot alkaloid biosynthesis. In terms of biological role, chanoclavine-I aldehyde reductase; part of the gene cluster that mediates the biosynthesis of isofumigaclavines, fungal ergot alkaloids. The tryptophan dimethylallyltransferase ifgA catalyzes the first step of ergot alkaloid biosynthesis by condensing dimethylallyl diphosphate (DMAP) and tryptophan to form 4-dimethylallyl-L-tryptophan. The second step is catalyzed by the methyltransferase ifgB that methylates 4-dimethylallyl-L-tryptophan in the presence of S-adenosyl-L-methionine, resulting in the formation of N-methyl-dimethylallyl-L-tryptophan. The catalase ifgD and the FAD-dependent oxidoreductase ifgC then transform N-methyl-dimethylallyl-L-tryptophan to chanoclavine-I which is further oxidized by ifgE in the presence of NAD(+), resulting in the formation of chanoclavine-I aldehyde. The chanoclavine-I aldehyde reductases ifgG and/or fgaOx3 reduce chanoclavine-I aldehyde to dihydrochanoclavine-I aldehyde that spontaneously dehydrates to form 6,8-dimethyl-6,7-didehydroergoline. The festuclavine dehydrogenases ifgF1 and/or ifgF2 then catalyze the reduction of 6,8-dimethyl-6,7-didehydroergoline to form festuclavine. Hydrolysis of festuclavine by a yet undetermined cytochrome P450 monooxygenase (called ifgH) then leads to the formation of isofumigaclavine B which is in turn acetylated by ifgI to isofumigaclavine A. Penicillium roqueforti has interestingly at least two sets of genes for the consumption of chanoclavine-I aldehyde on three different loci, the OYEs ifgG/fgaOx3 and the festuclavine synthase homologs ifgF1/ifgF2. The reason for the duplication of these genes is unclear, probably to ensure the conversion of chanoclavine-I aldehyde by differential gene expression under various environmental conditions. This chain is Chanoclavine-I aldehyde reductase fgaOx3, found in Penicillium roqueforti (strain FM164).